We begin with the raw amino-acid sequence, 397 residues long: Acetate kinase (397 aa).

Asn-7 contacts Mg(2+). Residue Lys-14 coordinates ATP. Residue Arg-90 participates in substrate binding. Residue Asp-147 is the Proton donor/acceptor of the active site. Residues 207 to 211 (HLGNG), 282 to 284 (DFR), and 330 to 334 (GLGEN) contribute to the ATP site. Glu-383 is a Mg(2+) binding site.

It belongs to the acetokinase family. Homodimer. Mg(2+) is required as a cofactor. Requires Mn(2+) as cofactor.

Its subcellular location is the cytoplasm. It carries out the reaction acetate + ATP = acetyl phosphate + ADP. It functions in the pathway metabolic intermediate biosynthesis; acetyl-CoA biosynthesis; acetyl-CoA from acetate: step 1/2. Functionally, catalyzes the formation of acetyl phosphate from acetate and ATP. Can also catalyze the reverse reaction. The protein is Acetate kinase of Clostridium botulinum (strain 657 / Type Ba4).